The primary structure comprises 329 residues: Telomeric repeat-binding factor 2-interacting protein 1 (329 aa).

Residues 63 to 86 (AVSTDYVVACVESQRRLPLDLYRH) form the BRCT domain. The Myb-like domain occupies 94–153 (ASPRGRLPFTEAEDAALLRAVRERSGAPRVSGTALWKELECTGLTRHSWQAMRDRYLRHL). The segment at 179-206 (EFESSESGSDTSDTPDELPLQNGEGTFP) is disordered. The Nuclear localization signal signature appears at 313-329 (AKFGAENVARRVAFRKS).

It belongs to the RAP1 family. In terms of assembly, homodimer. Component of the shelterin complex (telosome). Interacts with terf2; the interaction is direct.

It is found in the nucleus. Its subcellular location is the chromosome. The protein localises to the telomere. Its function is as follows. Acts both as a regulator of telomere function and as a transcription regulator. Involved in the regulation of telomere length and protection as a component of the shelterin complex (telosome). Does not bind DNA directly: recruited to telomeric double-stranded 5'-TTAGGG-3' repeats via its interaction with terf2. Independently of its function in telomeres, also acts as a transcription regulator: recruited to extratelomeric 5'-TTAGGG-3' sites via its association with terf2 or other factors, and regulates gene expression. This chain is Telomeric repeat-binding factor 2-interacting protein 1 (TERF2IP), found in Gallus gallus (Chicken).